The chain runs to 237 residues: ATP-dependent dethiobiotin synthetase BioD (237 aa).

12–17 is a binding site for ATP; that stretch reads DAGKTL. Thr16 contacts Mg(2+). Residue Lys37 is part of the active site. Residue Ser41 coordinates substrate. Residues Asp54, 116–119, and 213–215 each bind ATP; these read EGAG and PRL. Asp54 and Glu116 together coordinate Mg(2+).

This sequence belongs to the dethiobiotin synthetase family. In terms of assembly, homodimer. Requires Mg(2+) as cofactor.

The protein localises to the cytoplasm. It catalyses the reaction (7R,8S)-7,8-diammoniononanoate + CO2 + ATP = (4R,5S)-dethiobiotin + ADP + phosphate + 3 H(+). It participates in cofactor biosynthesis; biotin biosynthesis; biotin from 7,8-diaminononanoate: step 1/2. In terms of biological role, catalyzes a mechanistically unusual reaction, the ATP-dependent insertion of CO2 between the N7 and N8 nitrogen atoms of 7,8-diaminopelargonic acid (DAPA, also called 7,8-diammoniononanoate) to form a ureido ring. The polypeptide is ATP-dependent dethiobiotin synthetase BioD (Chromohalobacter salexigens (strain ATCC BAA-138 / DSM 3043 / CIP 106854 / NCIMB 13768 / 1H11)).